The primary structure comprises 291 residues: 3-methyl-2-oxobutanoate hydroxymethyltransferase (291 aa).

Residues 1 to 10 show a composition bias toward polar residues; that stretch reads MTQLSAAQTP. Positions 1–20 are disordered; sequence MTQLSAAQTPQPKPADGNRA. Mg(2+) is bound by residues D71 and D110. Residues 71-72, D110, and K140 contribute to the 3-methyl-2-oxobutanoate site; that span reads DS. A Mg(2+)-binding site is contributed by E142. Catalysis depends on E208, which acts as the Proton acceptor.

This sequence belongs to the PanB family. Homodecamer; pentamer of dimers. Mg(2+) is required as a cofactor.

The protein localises to the cytoplasm. The enzyme catalyses 3-methyl-2-oxobutanoate + (6R)-5,10-methylene-5,6,7,8-tetrahydrofolate + H2O = 2-dehydropantoate + (6S)-5,6,7,8-tetrahydrofolate. It participates in cofactor biosynthesis; (R)-pantothenate biosynthesis; (R)-pantoate from 3-methyl-2-oxobutanoate: step 1/2. Catalyzes the reversible reaction in which hydroxymethyl group from 5,10-methylenetetrahydrofolate is transferred onto alpha-ketoisovalerate to form ketopantoate. In Streptomyces coelicolor (strain ATCC BAA-471 / A3(2) / M145), this protein is 3-methyl-2-oxobutanoate hydroxymethyltransferase.